Consider the following 146-residue polypeptide: uncharacterized protein (146 aa).

The disordered stretch occupies residues S87–A121. Over residues A94–G106 the composition is skewed to low complexity.

This is an uncharacterized protein from Escherichia coli (strain K12).